Reading from the N-terminus, the 233-residue chain is Purine nucleoside phosphorylase DeoD-type (233 aa).

His-4 provides a ligand contact to a purine D-ribonucleoside. Residues Gly-20, Arg-24, Arg-43, and Arg-87 to Ser-90 contribute to the phosphate site. A purine D-ribonucleoside contacts are provided by residues Glu-178 to Glu-180 and Ser-202 to Asp-203. The active-site Proton donor is Asp-203.

It belongs to the PNP/UDP phosphorylase family. Homohexamer; trimer of homodimers.

It carries out the reaction a purine D-ribonucleoside + phosphate = a purine nucleobase + alpha-D-ribose 1-phosphate. The enzyme catalyses a purine 2'-deoxy-D-ribonucleoside + phosphate = a purine nucleobase + 2-deoxy-alpha-D-ribose 1-phosphate. Functionally, catalyzes the reversible phosphorolytic breakdown of the N-glycosidic bond in the beta-(deoxy)ribonucleoside molecules, with the formation of the corresponding free purine bases and pentose-1-phosphate. The polypeptide is Purine nucleoside phosphorylase DeoD-type (Bacillus subtilis (strain 168)).